A 549-amino-acid chain; its full sequence is Cation/acetate symporter ActP (549 aa).

A run of 13 helical transmembrane segments spans residues 33-53 (WQAI…TYWA), 77-97 (LAIA…ALVF), 103-123 (GLIY…LIAE), 148-168 (ILSA…QMVG), 183-203 (IAVV…GMLA), 206-226 (WVQI…AFMV), 262-282 (ISAL…PHIL), 303-323 (GFMG…IMLV), 355-375 (LFLG…VAGL), 404-424 (VSKI…VLFE), 428-448 (IAFM…PIIL), 464-484 (GGWL…TIWV), and 493-513 (IFPY…GIWF).

The protein belongs to the sodium:solute symporter (SSF) (TC 2.A.21) family.

It localises to the cell inner membrane. Functionally, transports acetate. This chain is Cation/acetate symporter ActP, found in Salmonella agona (strain SL483).